The following is a 355-amino-acid chain: UDP-3-O-acylglucosamine N-acyltransferase (355 aa).

Histidine 258 functions as the Proton acceptor in the catalytic mechanism.

This sequence belongs to the transferase hexapeptide repeat family. LpxD subfamily. In terms of assembly, homotrimer.

The catalysed reaction is a UDP-3-O-[(3R)-3-hydroxyacyl]-alpha-D-glucosamine + a (3R)-hydroxyacyl-[ACP] = a UDP-2-N,3-O-bis[(3R)-3-hydroxyacyl]-alpha-D-glucosamine + holo-[ACP] + H(+). Its pathway is bacterial outer membrane biogenesis; LPS lipid A biosynthesis. Its function is as follows. Catalyzes the N-acylation of UDP-3-O-acylglucosamine using 3-hydroxyacyl-ACP as the acyl donor. Is involved in the biosynthesis of lipid A, a phosphorylated glycolipid that anchors the lipopolysaccharide to the outer membrane of the cell. This Agrobacterium fabrum (strain C58 / ATCC 33970) (Agrobacterium tumefaciens (strain C58)) protein is UDP-3-O-acylglucosamine N-acyltransferase.